The sequence spans 810 residues: S-adenosyl-L-methionine-dependent tRNA 4-demethylwyosine synthase (810 aa).

Disordered regions lie at residues 86–116 (NGGG…KGGC) and 156–176 (RSST…VGKK). Low complexity predominate over residues 104–116 (GCCSSKGGKKGGC). Over residues 159-172 (TPKVFSKNSSSNSR) the composition is skewed to polar residues. The Flavodoxin-like domain occupies 205 to 360 (IYVLYSSLQG…KIDEWTSLLA (156 aa)). Residues 211 to 215 (SLQGA) and 304 to 337 (VLGL…RRIF) contribute to the FMN site. The segment covering 374–397 (DENADSEEDEEEGNGSDELGDVED) has biased composition (acidic residues). The disordered stretch occupies residues 374–407 (DENADSEEDEEEGNGSDELGDVEDIGGKGSNGKF). A Radical SAM core domain is found at 463 to 713 (FNIASSRCME…ELQRRGLHYD (251 aa)). [4Fe-4S] cluster is bound by residues cysteine 479, cysteine 483, and cysteine 486. A Glycyl lysine isopeptide (Lys-Gly) (interchain with G-Cter in ubiquitin) cross-link involves residue lysine 496. The tract at residues 782-810 (RVYRKDKKKQNKENQETTTRETPLPPIPA) is disordered.

This sequence belongs to the TYW1 family. The cofactor is [4Fe-4S] cluster.

It localises to the endoplasmic reticulum. It catalyses the reaction N(1)-methylguanosine(37) in tRNA(Phe) + pyruvate + S-adenosyl-L-methionine = 4-demethylwyosine(37) in tRNA(Phe) + 5'-deoxyadenosine + L-methionine + CO2 + H2O. It functions in the pathway tRNA modification; wybutosine-tRNA(Phe) biosynthesis. Component of the wybutosine biosynthesis pathway. Wybutosine is a hyper modified guanosine with a tricyclic base found at the 3'-position adjacent to the anticodon of eukaryotic phenylalanine tRNA. Catalyzes the condensation of N-methylguanine with 2 carbon atoms from pyruvate to form the tricyclic 4-demethylwyosine, an intermediate in wybutosine biosynthesis. This is S-adenosyl-L-methionine-dependent tRNA 4-demethylwyosine synthase (TYW1) from Saccharomyces cerevisiae (strain ATCC 204508 / S288c) (Baker's yeast).